Consider the following 776-residue polypeptide: Angiomotin-like protein 2 (776 aa).

The segment at 41-88 (GGAGAGGTGSPQASAEILAPEDTQVLQQATRQEPQGQEHQGGESHLAE) is disordered. Residues 101 to 307 (GEELPTYEEA…STQTSSAPSG (207 aa)) form a required for interaction with CDH5 region. The residue at position 107 (Y107) is a Phosphotyrosine. Disordered regions lie at residues 119 to 142 (AQQA…GHRS), 169 to 215 (RNGA…QYPH), and 283 to 309 (GPLG…SGSA). Positions 177–192 (HMSSSHSFPQLARNQQ) are enriched in polar residues. The span at 196-213 (PRGPPAEGPEPRGPPPQY) shows a compositional bias: pro residues. The required for interaction with CDH1 stretch occupies residues 220-307 (HETATAVTDP…STQTSSAPSG (88 aa)). The span at 297–306 (ASTQTSSAPS) shows a compositional bias: polar residues. Coiled coils occupy residues 314–509 (METL…LELR) and 543–570 (ALRL…WEQK). Residues K347 and K408 each participate in a glycyl lysine isopeptide (Lys-Gly) (interchain with G-Cter in ubiquitin) cross-link. Disordered regions lie at residues 591–620 (QRDT…GHRH) and 677–743 (TQGW…LDPD). Polar residues predominate over residues 678 to 687 (QGWQSLSSSE). Residues S756 and S759 each carry the phosphoserine modification. The PDZ-binding signature appears at 773–776 (EILI).

The protein belongs to the angiomotin family. As to quaternary structure, part of a complex composed of AMOTL2, MAGI1 and CDH5, within the complex AMOTL2 acts as a scaffold protein for the interaction of MAGI1 with CDH5. The complex is required for coupling actin fibers to cell junctions in endothelial cells. Within the complex AMOTL2 (via its N-terminus) interacts with CDH5. Interacts (via N-terminus) with MAGI1. Interacts (via N-terminus) with ACTB; the interaction facilitates binding of cell junction complexes to actin fibers in endothelial cells. Interacts with CDH1; the interaction may facilitate binding of radial actin fibers to cell junction complexes. Interacts with SRC. Interacts with YAP1; the interaction is required for ubiquitination of AMOTL2 and localization of YAP1 to tight junctions. Interacts with WWP1; the interaction facilitates WWP1 interaction with the Crumbs complex and subsequent WWP1 translocation to the plasma membrane. WPP1 interaction with the Crumbs complex promotes WPP1 monoubiquitination of AMOTL2 which subsequently activates the Hippo signaling pathway. When ubiquitinated interacts with LATS2 (via UBA domain); the interaction promotes LATS2 phosphorylation of YAP1. Interacts (via PPXY motif) with WWTR1/TAZ (via WW domain); the interaction promotes WWTR1/TAZ localization to the cytoplasm and thereby inhibition of its transcriptional properties. Interacts with PHLDB2; interaction may facilitate PHLDB2 localization to the myotube podosome cortex that surrounds the core. Post-translationally, monoubiquitinated at Lys-347 and Lys-408 by Crumbs complex-bound WWP1. De-ubiquitinated at Lys-347 and Lys-408 by USP9X; the interaction may be promoted by cell contact inhibition. Deubiquitination of AMOTL2 negatively regulates Hippo signaling activation. In terms of processing, phosphorylation at Tyr-107 is necessary for efficient binding to SRC and synergistically functioning with SRC to activate the downstream MAPK pathway.

Its subcellular location is the recycling endosome. It is found in the cytoplasm. It localises to the cell projection. The protein localises to the podosome. The protein resides in the cell junction. Functionally, regulates the translocation of phosphorylated SRC to peripheral cell-matrix adhesion sites. Required for proper architecture of actin filaments. Plays a role in coupling actin fibers to cell junctions in endothelial cells and is therefore required for correct endothelial cell morphology via facilitating transcellular transmission of mechanical force resulting in endothelial cell elongation. Required for the anchoring of radial actin fibers to CDH1 junction complexes at the cell membrane which facilitates organization of radial actin fiber structure and cellular response to contractile forces. This contributes to maintenance of cell area, size, shape, epithelial sheet organization and trophectoderm cell properties that facilitate blastocyst zona hatching. Inhibits the Wnt/beta-catenin signaling pathway, probably by recruiting CTNNB1 to recycling endosomes and hence preventing its translocation to the nucleus. Participates in angiogenesis. Activates the Hippo signaling pathway in response to cell contact inhibition via interaction with and ubiquitination by Crumbs complex-bound WWP1. Ubiquitinated AMOTL2 then interacts with LATS2 which in turn phosphorylates YAP1, excluding it from the nucleus and localizing it to the cytoplasm and tight junctions, therefore ultimately repressing YAP1-driven transcription of target genes. Acts to inhibit WWTR1/TAZ transcriptional coactivator activity via sequestering WWTR1/TAZ in the cytoplasm and at tight junctions. Regulates the size and protein composition of the podosome cortex and core at myofibril neuromuscular junctions. Selectively promotes FGF-induced MAPK activation through SRC. May play a role in the polarity, proliferation and migration of endothelial cells. The sequence is that of Angiomotin-like protein 2 from Canis lupus familiaris (Dog).